Reading from the N-terminus, the 126-residue chain is Large ribosomal subunit protein bL12c (126 aa).

This sequence belongs to the bacterial ribosomal protein bL12 family. As to quaternary structure, homodimer. Part of the ribosomal stalk of the 50S ribosomal subunit. Forms a multimeric L10(L12)X complex, where L10 forms an elongated spine to which 2 to 4 L12 dimers bind in a sequential fashion. Binds GTP-bound translation factors.

The protein localises to the plastid. It localises to the cyanelle. Forms part of the ribosomal stalk which helps the ribosome interact with GTP-bound translation factors. Is thus essential for accurate translation. This is Large ribosomal subunit protein bL12c from Cyanophora paradoxa.